Reading from the N-terminus, the 1545-residue chain is Tricalbin-3 (1545 aa).

The disordered stretch occupies residues 1–89 (MTGIKAQVHP…SNPEGKKQSS (89 aa)). The Cytoplasmic segment spans residues 1–206 (MTGIKAQVHP…AYILENFYND (206 aa)). Residues 62–80 (TKTSNSVSDVSKGQKTADS) show a composition bias toward polar residues. Phosphoserine occurs at positions 67 and 112. Residues 207–227 (WYCNIATVLGTCFFSWLFAYI) form a helical membrane-spanning segment. Residue glycine 228 is a topological domain, extracellular. A helical membrane pass occupies residues 229–249 (FSWWSMIFIFLGTATVYNAEY). The Cytoplasmic segment spans residues 250–1545 (TRFNRNIRDD…VPEVPQEYTQ (1296 aa)). One can recognise an SMP-LTD domain in the interval 272–479 (RVESTTWLNS…PPNHLDINVE (208 aa)). The 127-residue stretch at 470-596 (PPNHLDINVE…LQNPVLDNQT (127 aa)) folds into the C2 1 domain. The stretch at 620–660 (EDKSEEKAVERAEAKAKGKKEDENEDTTEKEEDENEESSQT) forms a coiled coil. Basic and acidic residues predominate over residues 624–641 (EEKAVERAEAKAKGKKED). The segment at 624–660 (EEKAVERAEAKAKGKKEDENEDTTEKEEDENEESSQT) is disordered. Acidic residues predominate over residues 642 to 658 (ENEDTTEKEEDENEESS). 2 C2 domains span residues 646–763 (TTEK…AQEF) and 783–897 (MTGA…SGKY). A coiled-coil region spans residues 937 to 972 (SPEELVNVEKLEKELKEKKKKFEATQEENEQEMEKN). The C2 4 domain occupies 1119–1234 (PTSVKLPSSE…EVGKTYNWNL (116 aa)). The Ca(2+) site is built by aspartate 1150, aspartate 1156, aspartate 1204, aspartate 1206, and aspartate 1212. A disordered region spans residues 1304–1404 (LLKSLGGNPM…NSRGHSRASS (101 aa)). Residues 1318–1328 (SSNGNESNGAK) show a composition bias toward polar residues. Over residues 1329–1340 (KSSEKKSFDRRS) the composition is skewed to basic and acidic residues. Serine 1340, serine 1342, and serine 1346 each carry phosphoserine. The span at 1341-1351 (PSNLNSTSVTP) shows a compositional bias: polar residues. The residue at position 1350 (threonine 1350) is a Phosphothreonine. A Phosphoserine modification is found at serine 1354. The segment covering 1361 to 1373 (VPNTSYAPVQSAS) has biased composition (polar residues). Over residues 1377-1404 (KPTDNTSSSSNKKDTPSSNSRGHSRASS) the composition is skewed to low complexity. In terms of domain architecture, C2 5 spans 1396–1514 (SRGHSRASSF…QQDGQISVKL (119 aa)). Serine 1400 carries the post-translational modification Phosphoserine.

It belongs to the tricalbin family. In terms of assembly, interacts with TCB2 via its C-terminal domain. Requires Ca(2+) as cofactor.

It localises to the cell membrane. The protein resides in the endoplasmic reticulum membrane. Functionally, may play a role in membrane trafficking. This is Tricalbin-3 (TCB3) from Saccharomyces cerevisiae (strain ATCC 204508 / S288c) (Baker's yeast).